Consider the following 587-residue polypeptide: Aspartate--tRNA ligase (587 aa).

Position 175 (Glu-175) interacts with L-aspartate. An aspartate region spans residues 199 to 202 (QQFK). Residues Arg-221 and His-446 each contribute to the L-aspartate site. 221–223 (RDE) serves as a coordination point for ATP. Glu-480 contacts ATP. L-aspartate is bound at residue Arg-487. Residue 532–535 (GVDR) coordinates ATP.

The protein belongs to the class-II aminoacyl-tRNA synthetase family. Type 1 subfamily. As to quaternary structure, homodimer.

The protein resides in the cytoplasm. The enzyme catalyses tRNA(Asp) + L-aspartate + ATP = L-aspartyl-tRNA(Asp) + AMP + diphosphate. Catalyzes the attachment of L-aspartate to tRNA(Asp) in a two-step reaction: L-aspartate is first activated by ATP to form Asp-AMP and then transferred to the acceptor end of tRNA(Asp). The polypeptide is Aspartate--tRNA ligase (Streptomyces avermitilis (strain ATCC 31267 / DSM 46492 / JCM 5070 / NBRC 14893 / NCIMB 12804 / NRRL 8165 / MA-4680)).